Reading from the N-terminus, the 339-residue chain is Non-homologous end joining protein Ku (339 aa).

The Ku domain occupies 10 to 187 (ITFGLVNIPV…LPKATTGKPT (178 aa)). 2 disordered regions span residues 230–251 (DSGK…RQGA) and 263–339 (SLGQ…KHAA). Basic and acidic residues predominate over residues 267 to 277 (RGKEDKEDATP). A compositionally biased stretch (basic residues) spans 278–289 (ARRKAPARHAAA). Residues 290 to 310 (RKQPAAKRAATPPAKRASTAA) show a composition bias toward low complexity.

It belongs to the prokaryotic Ku family. Homodimer. Interacts with LigD.

Its function is as follows. With LigD forms a non-homologous end joining (NHEJ) DNA repair enzyme, which repairs dsDNA breaks with reduced fidelity. Binds linear dsDNA with 5'- and 3'- overhangs but not closed circular dsDNA nor ssDNA. Recruits and stimulates the ligase activity of LigD. This chain is Non-homologous end joining protein Ku, found in Cupriavidus necator (strain ATCC 17699 / DSM 428 / KCTC 22496 / NCIMB 10442 / H16 / Stanier 337) (Ralstonia eutropha).